Consider the following 937-residue polypeptide: FNIP repeat-containing protein DDB_G0271996 (937 aa).

Residues 1-12 (MQQPISIQQPVV) are compositionally biased toward polar residues. The tract at residues 1 to 60 (MQQPISIQQPVVNNINNSPNNQANINNNTTNNTNNNNNNNNTTNNIANNNNSNNINNNNE) is disordered. A compositionally biased stretch (low complexity) spans 13-60 (NNINNSPNNQANINNNTTNNTNNNNNNNNTTNNIANNNNSNNINNNNE). FNIP repeat units lie at residues 307–350 (FNQP…LGQR), 354–394 (PIPI…TLDN), 396–439 (FNQP…FHQN), and 598–640 (YNHQ…RVKS). The stretch at 677 to 769 (VEQQAQYAQQ…EEEDTNNHQH (93 aa)) forms a coiled coil. The span at 719–729 (KQQQQQQQDNE) shows a compositional bias: low complexity. Disordered stretches follow at residues 719 to 767 (KQQQ…TNNH), 794 to 823 (SNNS…EEED), and 910 to 937 (QNQN…NVKK). Positions 751-763 (LEEEQENEEEEED) are enriched in acidic residues. Low complexity-rich tracts occupy residues 794-814 (SNNS…NNNS) and 910-929 (QNQN…NNNN). A coiled-coil region spans residues 902–937 (ICNNINQNQNQNNNNYNNNNNNNNNNNNNKKKNVKK).

The sequence is that of FNIP repeat-containing protein DDB_G0271996 from Dictyostelium discoideum (Social amoeba).